A 219-amino-acid chain; its full sequence is Phosphate-specific transport system accessory protein PhoU homolog (219 aa).

This sequence belongs to the PhoU family. As to quaternary structure, homodimer.

The protein resides in the cytoplasm. In terms of biological role, plays a role in the regulation of phosphate uptake. Encoded together with proteins of the phosphate-specific transport (Pst) system in the polycistronic pstSCAB-phoU operon. The chain is Phosphate-specific transport system accessory protein PhoU homolog from Clostridium acetobutylicum (strain ATCC 824 / DSM 792 / JCM 1419 / IAM 19013 / LMG 5710 / NBRC 13948 / NRRL B-527 / VKM B-1787 / 2291 / W).